We begin with the raw amino-acid sequence, 81 residues long: X antigen family member 1 (81 aa).

Lys-12 participates in a covalent cross-link: Glycyl lysine isopeptide (Lys-Gly) (interchain with G-Cter in SUMO2). A Phosphoserine modification is found at Ser-20. Residues Lys-61 and Lys-65 each participate in a glycyl lysine isopeptide (Lys-Gly) (interchain with G-Cter in SUMO2) cross-link.

It belongs to the GAGE family. As to expression, in normal tissues, highly expressed in testis. Expressed also in many different types of cancers: highly expressed in breast cancer, prostate cancer and many types of lung cancers, including squamous cell carcinoma, small cell carcinoma, non-small cell carcinoma, and adenocarcinoma, as well as in Ewing's cell lines, in some Ewing's sarcoma patient samples, and in one of one alveolar rhabdomyosarcoma patient sample.

The chain is X antigen family member 1 from Homo sapiens (Human).